The primary structure comprises 303 residues: 4-diphosphocytidyl-2-C-methyl-D-erythritol kinase (303 aa).

The active site involves K21. 106–116 (PVAAGIGGGSA) contacts ATP. D148 is a catalytic residue.

This sequence belongs to the GHMP kinase family. IspE subfamily.

The enzyme catalyses 4-CDP-2-C-methyl-D-erythritol + ATP = 4-CDP-2-C-methyl-D-erythritol 2-phosphate + ADP + H(+). It functions in the pathway isoprenoid biosynthesis; isopentenyl diphosphate biosynthesis via DXP pathway; isopentenyl diphosphate from 1-deoxy-D-xylulose 5-phosphate: step 3/6. In terms of biological role, catalyzes the phosphorylation of the position 2 hydroxy group of 4-diphosphocytidyl-2C-methyl-D-erythritol. This Nitrobacter hamburgensis (strain DSM 10229 / NCIMB 13809 / X14) protein is 4-diphosphocytidyl-2-C-methyl-D-erythritol kinase.